A 1153-amino-acid chain; its full sequence is Protein unc-13 homolog 4B (1153 aa).

The interval 54-84 (VLKSSLAPLEENGSGGEEDSDESPDGTLQLS) is disordered. The C2 1 domain maps to 162–288 (ATHEEIYEAA…MKEIAVTASS (127 aa)). The Ca(2+) site is built by aspartate 195, aspartate 201, aspartate 252, phenylalanine 253, and aspartate 254. One can recognise an MHD1 domain in the interval 637–755 (FEVYLILKRY…RCCIFYAQQM (119 aa)). The region spanning 869-975 (SNSMDQLMMY…LETSDLIHQY (107 aa)) is the MHD2 domain. The region spanning 990 to 1114 (PYGQLTITAQ…EATPPGEQIM (125 aa)) is the C2 2 domain. The Ca(2+) site is built by aspartate 1019, aspartate 1025, aspartate 1083, and aspartate 1085.

This sequence belongs to the unc-13 family. As to quaternary structure, interacts with Cam. Requires Ca(2+) as cofactor.

The protein resides in the cytoplasm. It localises to the cytoskeleton. Its subcellular location is the cell projection. The protein localises to the filopodium. It is found in the late endosome. The protein resides in the lysosome. Essential for tracheal development in embryos. Functions with the GTPase Rab39 and downstream of dnd, to regulate lumen fusion between previously separate tracheal branches (anastomosis). Essential component of secretory lysosome-related organelles (SLs) that are present in the tracheal fusion tip cells (FCs). Mediates intracellular fusion of the extending tracheal stalk cell lumen in the FCs by recruiting the SNARE complex component Syx1A to the SLs, this may then enable the SLs to interact with complementary SNAREs (such as Syb) present in the apical membrane of the FC-FC interface and the membranes of the separate tracheal stalk cells. May also function in the maturation and exocytosis of the SLs. The chain is Protein unc-13 homolog 4B from Drosophila melanogaster (Fruit fly).